We begin with the raw amino-acid sequence, 377 residues long: Succinyl-diaminopimelate desuccinylase (377 aa).

Histidine 67 contributes to the Zn(2+) binding site. Aspartate 69 is an active-site residue. Aspartate 100 is a binding site for Zn(2+). The active-site Proton acceptor is the glutamate 134. Glutamate 135, glutamate 163, and histidine 349 together coordinate Zn(2+).

The protein belongs to the peptidase M20A family. DapE subfamily. As to quaternary structure, homodimer. It depends on Zn(2+) as a cofactor. Co(2+) serves as cofactor.

The enzyme catalyses N-succinyl-(2S,6S)-2,6-diaminopimelate + H2O = (2S,6S)-2,6-diaminopimelate + succinate. Its pathway is amino-acid biosynthesis; L-lysine biosynthesis via DAP pathway; LL-2,6-diaminopimelate from (S)-tetrahydrodipicolinate (succinylase route): step 3/3. Catalyzes the hydrolysis of N-succinyl-L,L-diaminopimelic acid (SDAP), forming succinate and LL-2,6-diaminopimelate (DAP), an intermediate involved in the bacterial biosynthesis of lysine and meso-diaminopimelic acid, an essential component of bacterial cell walls. This chain is Succinyl-diaminopimelate desuccinylase, found in Haemophilus influenzae (strain 86-028NP).